Here is a 711-residue protein sequence, read N- to C-terminus: Interferon-induced GTP-binding protein Mx2 (711 aa).

In terms of domain architecture, Dynamin-type G spans 115–387 (DLALPAIAVI…LILHINKSLP (273 aa)). The segment at 125-132 (GDQSSGKS) is G1 motif. 125–132 (GDQSSGKS) provides a ligand contact to GTP. The interval 150–152 (VTR) is G2 motif. Residues 225–228 (DLPG) are G3 motif. GTP contacts are provided by residues 225–229 (DLPGI) and 294–297 (TKPD). A G4 motif region spans residues 294–297 (TKPD). The interval 326 to 329 (RCRG) is G5 motif. One can recognise a GED domain in the interval 623–711 (NDEIGVHLNA…ARRALYMFFS (89 aa)).

This sequence belongs to the TRAFAC class dynamin-like GTPase superfamily. Dynamin/Fzo/YdjA family.

It localises to the cytoplasm. It is found in the nucleus. Functionally, interferon-induced dynamin-like GTPase with antiviral activity against vesicular stomatitis virus (VSV). The polypeptide is Interferon-induced GTP-binding protein Mx2 (MX2) (Canis lupus familiaris (Dog)).